The sequence spans 879 residues: DNA mismatch repair protein MutS (879 aa).

Position 629-636 (629-636) interacts with ATP; that stretch reads GPNMAGKS.

The protein belongs to the DNA mismatch repair MutS family.

Its function is as follows. This protein is involved in the repair of mismatches in DNA. It is possible that it carries out the mismatch recognition step. This protein has a weak ATPase activity. In Ruegeria sp. (strain TM1040) (Silicibacter sp.), this protein is DNA mismatch repair protein MutS.